The chain runs to 147 residues: Hemoglobin subunit beta (147 aa).

At valine 2 the chain carries N-acetylvaline. The Globin domain occupies 3–147 (HLTPEEKNAV…VANALAHKYH (145 aa)). Phosphothreonine is present on threonine 13. At serine 45 the chain carries Phosphoserine. Lysine 60 bears the N6-acetyllysine mark. Histidine 64 provides a ligand contact to heme b. N6-acetyllysine is present on lysine 83. Position 93 (histidine 93) interacts with heme b. Residue cysteine 94 is modified to S-nitrosocysteine. Position 145 is an N6-acetyllysine (lysine 145).

The protein belongs to the globin family. Heterotetramer of two alpha chains and two beta chains. As to expression, red blood cells.

In terms of biological role, involved in oxygen transport from the lung to the various peripheral tissues. The chain is Hemoglobin subunit beta (HBB) from Papio anubis (Olive baboon).